The following is an 82-amino-acid chain: ATP synthase subunit c (82 aa).

2 helical membrane passes run 7–27 (FVALAAGLIIGLGAVGACIGI) and 53–73 (FLLAGLIDAAFLIGVGIAMMF).

It belongs to the ATPase C chain family. F-type ATPases have 2 components, F(1) - the catalytic core - and F(0) - the membrane proton channel. F(1) has five subunits: alpha(3), beta(3), gamma(1), delta(1), epsilon(1). F(0) has three main subunits: a(1), b(2) and c(10-14). The alpha and beta chains form an alternating ring which encloses part of the gamma chain. F(1) is attached to F(0) by a central stalk formed by the gamma and epsilon chains, while a peripheral stalk is formed by the delta and b chains.

Its subcellular location is the cell inner membrane. Functionally, f(1)F(0) ATP synthase produces ATP from ADP in the presence of a proton or sodium gradient. F-type ATPases consist of two structural domains, F(1) containing the extramembraneous catalytic core and F(0) containing the membrane proton channel, linked together by a central stalk and a peripheral stalk. During catalysis, ATP synthesis in the catalytic domain of F(1) is coupled via a rotary mechanism of the central stalk subunits to proton translocation. Key component of the F(0) channel; it plays a direct role in translocation across the membrane. A homomeric c-ring of between 10-14 subunits forms the central stalk rotor element with the F(1) delta and epsilon subunits. This Polaromonas sp. (strain JS666 / ATCC BAA-500) protein is ATP synthase subunit c.